The chain runs to 184 residues: Ribosome maturation factor RimM (184 aa).

Residues 93-165 (DEGWYEHELV…YILITPPSGL (73 aa)) form the PRC barrel domain.

It belongs to the RimM family. In terms of assembly, binds ribosomal protein uS19.

It localises to the cytoplasm. Its function is as follows. An accessory protein needed during the final step in the assembly of 30S ribosomal subunit, possibly for assembly of the head region. Essential for efficient processing of 16S rRNA. May be needed both before and after RbfA during the maturation of 16S rRNA. It has affinity for free ribosomal 30S subunits but not for 70S ribosomes. This chain is Ribosome maturation factor RimM, found in Paenarthrobacter aurescens (strain TC1).